The primary structure comprises 171 residues: 3-hydroxydecanoyl-[acyl-carrier-protein] dehydratase (171 aa).

The active site involves His70.

This sequence belongs to the thioester dehydratase family. FabA subfamily. In terms of assembly, homodimer.

Its subcellular location is the cytoplasm. The enzyme catalyses a (3R)-hydroxyacyl-[ACP] = a (2E)-enoyl-[ACP] + H2O. It carries out the reaction (3R)-hydroxydecanoyl-[ACP] = (2E)-decenoyl-[ACP] + H2O. It catalyses the reaction (2E)-decenoyl-[ACP] = (3Z)-decenoyl-[ACP]. It participates in lipid metabolism; fatty acid biosynthesis. Necessary for the introduction of cis unsaturation into fatty acids. Catalyzes the dehydration of (3R)-3-hydroxydecanoyl-ACP to E-(2)-decenoyl-ACP and then its isomerization to Z-(3)-decenoyl-ACP. Can catalyze the dehydratase reaction for beta-hydroxyacyl-ACPs with saturated chain lengths up to 16:0, being most active on intermediate chain length. The sequence is that of 3-hydroxydecanoyl-[acyl-carrier-protein] dehydratase from Shewanella denitrificans (strain OS217 / ATCC BAA-1090 / DSM 15013).